We begin with the raw amino-acid sequence, 199 residues long: Large ribosomal subunit protein bL17 (199 aa).

A disordered region spans residues 123–199; sequence DEANRARRAA…EESEAKDDTK (77 aa). A compositionally biased stretch (basic and acidic residues) spans 137-152; the sequence is KADERADEKADEKAEE. Residues 153–199 show a composition bias toward acidic residues; that stretch reads TVEETTEAPAEESTEAAAEETVEETTEAPAEESTEAAEESEAKDDTK.

Belongs to the bacterial ribosomal protein bL17 family. Part of the 50S ribosomal subunit. Contacts protein L32.

The protein is Large ribosomal subunit protein bL17 of Mycolicibacterium smegmatis (strain ATCC 700084 / mc(2)155) (Mycobacterium smegmatis).